Consider the following 140-residue polypeptide: 3-hydroxyacyl-[acyl-carrier-protein] dehydratase FabZ (140 aa).

Residue H47 is part of the active site.

The protein belongs to the thioester dehydratase family. FabZ subfamily.

The protein resides in the cytoplasm. The catalysed reaction is a (3R)-hydroxyacyl-[ACP] = a (2E)-enoyl-[ACP] + H2O. In terms of biological role, involved in unsaturated fatty acids biosynthesis. Catalyzes the dehydration of short chain beta-hydroxyacyl-ACPs and long chain saturated and unsaturated beta-hydroxyacyl-ACPs. This Streptococcus uberis (strain ATCC BAA-854 / 0140J) protein is 3-hydroxyacyl-[acyl-carrier-protein] dehydratase FabZ.